The following is a 385-amino-acid chain: Putative type I restriction enzyme specificity subunit S.HindORF215P (385 aa).

It belongs to the type-I restriction system S methylase family.

A putative specificity subunit for a type I restriction enzyme; the corresponding endonuclease and methylase subunits have multiple frameshifts and are probably not expressed. The sequence is that of Putative type I restriction enzyme specificity subunit S.HindORF215P from Haemophilus influenzae (strain ATCC 51907 / DSM 11121 / KW20 / Rd).